A 499-amino-acid chain; its full sequence is Trichoplein keratin filament-binding protein (499 aa).

Positions 12-38 (SRVRTLEQQLVRQREQEARLRRQWEQH) form a coiled coil. Disordered stretches follow at residues 46-78 (DVRS…EEKQ) and 169-209 (VQQQ…EEEN). A compositionally biased stretch (polar residues) spans 50–67 (SKQAQWSSRQSFHRSMSA). Basic and acidic residues-rich tracts occupy residues 69-78 (QRDRMREEKQ) and 172-209 (QEKK…EEEN). 3 coiled-coil regions span residues 71-133 (DRMR…ERRK), 168-306 (QVQQ…ALLE), and 359-484 (WEKR…MIRQ). The segment at 74–499 (REEKQRKLEE…IHSRPRSAWT (426 aa)) is interaction with keratin proteins. Residues 260-426 (KMMEESRRKT…RLTLRLEKEQ (167 aa)) form a trichohyalin/plectin homology domain region.

Belongs to the TCHP family.

The protein localises to the cytoplasm. The protein resides in the cytoskeleton. It is found in the microtubule organizing center. Its subcellular location is the centrosome. In terms of biological role, may act as a 'capping' or 'branching' protein for keratin filaments in the cell periphery. May regulate K8/K18 filament and desmosome organization mainly at the apical or peripheral regions of simple epithelial cells. The protein is Trichoplein keratin filament-binding protein of Danio rerio (Zebrafish).